Consider the following 208-residue polypeptide: Holliday junction resolvase RecU (208 aa).

Residues 1–28 (MNYPNGKPYSKNKPLDGRKSSPFSSNIE) form a disordered region. Thr87, Asp89, Glu102, and Gln121 together coordinate Mg(2+).

The protein belongs to the RecU family. The cofactor is Mg(2+).

Its subcellular location is the cytoplasm. The enzyme catalyses Endonucleolytic cleavage at a junction such as a reciprocal single-stranded crossover between two homologous DNA duplexes (Holliday junction).. Its function is as follows. Endonuclease that resolves Holliday junction intermediates in genetic recombination. Cleaves mobile four-strand junctions by introducing symmetrical nicks in paired strands. Promotes annealing of linear ssDNA with homologous dsDNA. Required for DNA repair, homologous recombination and chromosome segregation. The sequence is that of Holliday junction resolvase RecU from Staphylococcus epidermidis (strain ATCC 12228 / FDA PCI 1200).